We begin with the raw amino-acid sequence, 246 residues long: Hydroxyacylglutathione hydrolase (246 aa).

7 residues coordinate Zn(2+): histidine 58, histidine 60, aspartate 62, histidine 63, histidine 117, aspartate 137, and histidine 175.

Belongs to the metallo-beta-lactamase superfamily. Glyoxalase II family. In terms of assembly, monomer. Zn(2+) is required as a cofactor.

The catalysed reaction is an S-(2-hydroxyacyl)glutathione + H2O = a 2-hydroxy carboxylate + glutathione + H(+). The protein operates within secondary metabolite metabolism; methylglyoxal degradation; (R)-lactate from methylglyoxal: step 2/2. Its function is as follows. Thiolesterase that catalyzes the hydrolysis of S-D-lactoyl-glutathione to form glutathione and D-lactic acid. The sequence is that of Hydroxyacylglutathione hydrolase from Prochlorococcus marinus (strain MIT 9312).